Reading from the N-terminus, the 274-residue chain is 2,3,4,5-tetrahydropyridine-2,6-dicarboxylate N-succinyltransferase (274 aa).

2 residues coordinate substrate: arginine 104 and aspartate 141.

The protein belongs to the transferase hexapeptide repeat family. In terms of assembly, homotrimer.

Its subcellular location is the cytoplasm. It catalyses the reaction (S)-2,3,4,5-tetrahydrodipicolinate + succinyl-CoA + H2O = (S)-2-succinylamino-6-oxoheptanedioate + CoA. It functions in the pathway amino-acid biosynthesis; L-lysine biosynthesis via DAP pathway; LL-2,6-diaminopimelate from (S)-tetrahydrodipicolinate (succinylase route): step 1/3. This chain is 2,3,4,5-tetrahydropyridine-2,6-dicarboxylate N-succinyltransferase, found in Escherichia coli O6:H1 (strain CFT073 / ATCC 700928 / UPEC).